The primary structure comprises 517 residues: Probable mannosyltransferase KTR7 (517 aa).

Topologically, residues 1–23 (MAIRLNPKVRRFLLDKCRQKRYG) are cytoplasmic. A helical; Signal-anchor for type II membrane protein membrane pass occupies residues 24–44 (FLFLGCIFAILYCMGTWPFFA). The segment at 45–85 (KDIVHDPNNLPYSLQDYSTDKDEPFFRGCTDTKLYLQNPAY) is stem region. The Lumenal portion of the chain corresponds to 45–517 (KDIVHDPNNL…IRRENFRVIE (473 aa)). The segment at 86-517 (SKMNASFVML…IRRENFRVIE (432 aa)) is catalytic. N-linked (GlcNAc...) asparagine glycans are attached at residues Asn-89 and Asn-144. Catalysis depends on Glu-367, which acts as the Nucleophile.

It belongs to the glycosyltransferase 15 family.

The protein localises to the membrane. Possible glycosyltransferase that transfers an alpha-D-mannosyl residue from GDP-mannose into lipid-linked oligosaccharide, forming an alpha-(1-&gt;2)-D-mannosyl-D-mannose linkage. In Saccharomyces cerevisiae (strain ATCC 204508 / S288c) (Baker's yeast), this protein is Probable mannosyltransferase KTR7 (KTR7).